Consider the following 242-residue polypeptide: Methylthioribulose-1-phosphate dehydratase (242 aa).

The interval 1–22 (MAAASGHGLELANGGDATQDKL) is disordered. Cys97 serves as a coordination point for substrate. Zn(2+)-binding residues include His115 and His117. Glu139 acts as the Proton donor/acceptor in catalysis. Residue His195 participates in Zn(2+) binding.

Belongs to the aldolase class II family. MtnB subfamily. It depends on Zn(2+) as a cofactor.

The protein localises to the cytoplasm. The catalysed reaction is 5-(methylsulfanyl)-D-ribulose 1-phosphate = 5-methylsulfanyl-2,3-dioxopentyl phosphate + H2O. It functions in the pathway amino-acid biosynthesis; L-methionine biosynthesis via salvage pathway; L-methionine from S-methyl-5-thio-alpha-D-ribose 1-phosphate: step 2/6. Catalyzes the dehydration of methylthioribulose-1-phosphate (MTRu-1-P) into 2,3-diketo-5-methylthiopentyl-1-phosphate (DK-MTP-1-P). Functions in the methionine salvage pathway. May play a role in apoptosis. The polypeptide is Methylthioribulose-1-phosphate dehydratase (Gallus gallus (Chicken)).